A 240-amino-acid chain; its full sequence is Spore coat polysaccharide biosynthesis protein SpsF (240 aa).

This sequence belongs to the CMP-NeuNAc synthase family.

The protein operates within spore coat biogenesis; spore coat polysaccharide biosynthesis. The chain is Spore coat polysaccharide biosynthesis protein SpsF (spsF) from Bacillus subtilis (strain 168).